We begin with the raw amino-acid sequence, 143 residues long: Large ribosomal subunit protein uL15 (143 aa).

Residues 20-52 (GRGIGSGKGKTAGRGHKGQHSRAGGYHKVGFEG) are disordered. The span at 30–39 (TAGRGHKGQH) shows a compositional bias: basic residues.

Belongs to the universal ribosomal protein uL15 family. Part of the 50S ribosomal subunit.

Its function is as follows. Binds to the 23S rRNA. The chain is Large ribosomal subunit protein uL15 from Coxiella burnetii (strain CbuK_Q154) (Coxiella burnetii (strain Q154)).